The chain runs to 564 residues: Cytochrome c oxidase subunit 1 (564 aa).

Residues 1 to 23 form a disordered region; it reads MTAVAPRLENYAEPTRPAPTGGA. The next 7 helical transmembrane spans lie at 43 to 63, 83 to 103, 122 to 142, 171 to 191, 214 to 234, 259 to 279, and 292 to 312; these read MMYIVMSFVWFFVGGLMALLI, LFTLHGTIMLLAFGTPVVWGF, LNAFGFWITQIGVVAMLAGFL, FWIIGVGATGVGTIASAVNMI, IFVASVIVLLIFPLLTAAALG, LFWFFGHPEVYVLALPFFGIV, and FGYIGLVFATLSIGMLSMAVW. His87 serves as a coordination point for Fe(II)-heme a. Cu cation contacts are provided by His265 and Tyr269. Residues 265–269 constitute a cross-link (1'-histidyl-3'-tyrosine (His-Tyr)); the sequence is HPEVY. Positions 314 and 315 each coordinate Cu cation. 2 helical membrane-spanning segments follow: residues 316 to 336 and 360 to 380; these read MFVTGAILLPFFSFMTFLISV and MTWTMGFLVTFLFGGLTGIML. Heme a3 is bound at residue His398. 3 consecutive transmembrane segments (helical) span residues 399–419, 434–454, and 477–497; these read FHYTLFGTVVFASYAGVYFWF, IHFWITFVGFHGTFLVQHWVG, and ISTVFSFLLGVSVIPFIWNVF. Residue His400 participates in Fe(II)-heme a binding.

It belongs to the heme-copper respiratory oxidase family. As to quaternary structure, associates with subunits II, III and IV to form cytochrome c oxidase. It depends on Cu(2+) as a cofactor. The cofactor is heme.

It localises to the cell membrane. It catalyses the reaction 4 Fe(II)-[cytochrome c] + O2 + 8 H(+)(in) = 4 Fe(III)-[cytochrome c] + 2 H2O + 4 H(+)(out). The protein operates within energy metabolism; oxidative phosphorylation. Cytochrome c oxidase is the component of the respiratory chain that catalyzes the reduction of oxygen to water. Subunits 1-3 form the functional core of the enzyme complex. CO I is the catalytic subunit of the enzyme. Electrons originating in cytochrome c are transferred via the copper A center of subunit 2 and heme A of subunit 1 to the bimetallic center formed by heme A3 and copper B. The protein is Cytochrome c oxidase subunit 1 (ctaD) of Corynebacterium diphtheriae (strain ATCC 700971 / NCTC 13129 / Biotype gravis).